The following is a 181-amino-acid chain: MILVVGLGNIGVEYENTRHNVGFMLIDLLLKESNFTNLTNSKFKGELFKIGSSLLLLKPSTYMNNSGLSVKAVNDFYKCERMIVIHDDIDINLGALRFKKGGSSGGHNGLKSIDALCGNDYERVRIGVGKGENVISHVLDKFKPEEEITLSKVLEHTKKALLELIEKDDLSAISSKYSLKA.

Residue Tyr-14 coordinates tRNA. His-19 functions as the Proton acceptor in the catalytic mechanism. TRNA is bound by residues Tyr-62, Asn-64, and Asn-108.

It belongs to the PTH family. As to quaternary structure, monomer.

It is found in the cytoplasm. It catalyses the reaction an N-acyl-L-alpha-aminoacyl-tRNA + H2O = an N-acyl-L-amino acid + a tRNA + H(+). Its function is as follows. Hydrolyzes ribosome-free peptidyl-tRNAs (with 1 or more amino acids incorporated), which drop off the ribosome during protein synthesis, or as a result of ribosome stalling. Functionally, catalyzes the release of premature peptidyl moieties from peptidyl-tRNA molecules trapped in stalled 50S ribosomal subunits, and thus maintains levels of free tRNAs and 50S ribosomes. This Campylobacter jejuni subsp. doylei (strain ATCC BAA-1458 / RM4099 / 269.97) protein is Peptidyl-tRNA hydrolase.